A 368-amino-acid chain; its full sequence is 3-dehydroquinate synthase (368 aa).

Residues 71–76 (DGEAFK), 105–109 (GVVGD), 129–130 (TT), K142, K151, and 169–172 (TLRT) each bind NAD(+). E184, H247, and H264 together coordinate Zn(2+).

The protein belongs to the sugar phosphate cyclases superfamily. Dehydroquinate synthase family. Requires Co(2+) as cofactor. Zn(2+) serves as cofactor. The cofactor is NAD(+).

Its subcellular location is the cytoplasm. It catalyses the reaction 7-phospho-2-dehydro-3-deoxy-D-arabino-heptonate = 3-dehydroquinate + phosphate. It participates in metabolic intermediate biosynthesis; chorismate biosynthesis; chorismate from D-erythrose 4-phosphate and phosphoenolpyruvate: step 2/7. Functionally, catalyzes the conversion of 3-deoxy-D-arabino-heptulosonate 7-phosphate (DAHP) to dehydroquinate (DHQ). The protein is 3-dehydroquinate synthase of Cupriavidus necator (strain ATCC 17699 / DSM 428 / KCTC 22496 / NCIMB 10442 / H16 / Stanier 337) (Ralstonia eutropha).